Here is a 135-residue protein sequence, read N- to C-terminus: Nucleoside diphosphate kinase (135 aa).

Positions 11, 59, 87, 93, 104, and 114 each coordinate ATP. His-117 serves as the catalytic Pros-phosphohistidine intermediate.

Belongs to the NDK family. Homotetramer. The cofactor is Mg(2+).

It is found in the cytoplasm. The catalysed reaction is a 2'-deoxyribonucleoside 5'-diphosphate + ATP = a 2'-deoxyribonucleoside 5'-triphosphate + ADP. It carries out the reaction a ribonucleoside 5'-diphosphate + ATP = a ribonucleoside 5'-triphosphate + ADP. Its function is as follows. Major role in the synthesis of nucleoside triphosphates other than ATP. The ATP gamma phosphate is transferred to the NDP beta phosphate via a ping-pong mechanism, using a phosphorylated active-site intermediate. The chain is Nucleoside diphosphate kinase from Marinomonas sp. (strain MWYL1).